Reading from the N-terminus, the 610-residue chain is E-selectin (610 aa).

The first 21 residues, 1-21, serve as a signal peptide directing secretion; it reads MIASQFLSALTLVLLIKESGA. The C-type lectin domain maps to 22–139; that stretch reads WSYNTSTEAM…CSKKKLALCY (118 aa). Topologically, residues 22-556 are extracellular; that stretch reads WSYNTSTEAM…CEAPTESNIP (535 aa). N25 is a glycosylation site (N-linked (GlcNAc...) asparagine). 5 disulfides stabilise this stretch: C40/C138, C111/C130, C143/C154, C148/C163, and C165/C174. The Ca(2+) site is built by E101, N103, and E109. A carbohydrate is bound by residues 101-109, 113-118, and 126-128; these read EPNNRQKDE, EIYIKR, and NDE. Ca(2+)-binding residues include N126 and D127. Residues 140 to 175 form the EGF-like domain; that stretch reads TAACTNTSCSGHGECVETINNYTCKCDPGFSGLKCE. N145 and N160 each carry an N-linked (GlcNAc...) asparagine glycan. Sushi domains follow at residues 178-239, 240-301, 303-364, 366-427, 429-490, and 491-549; these read VNCT…ACNV, VECD…TCKA, TCRA…VCEA, QCTA…TCEA, RCDA…SCQV, and VKCS…TCEA. N-linked (GlcNAc...) asparagine glycans are attached at residues N179, N199, and N203. 14 disulfides stabilise this stretch: C180-C224, C193-C206, C210-C237, C242-C286, C255-C268, C272-C299, C304-C349, C335-C362, C367-C412, C398-C425, C430-C475, C461-C488, C493-C534, and C520-C547. N265 carries an N-linked (GlcNAc...) asparagine glycan. N-linked (GlcNAc...) asparagine glycans are attached at residues N312 and N332. 2 N-linked (GlcNAc...) asparagine glycosylation sites follow: N503 and N527. The chain crosses the membrane as a helical span at residues 557–578; that stretch reads LVAGLSAAGLSLLTLAPFLLWL. The Cytoplasmic segment spans residues 579 to 610; that stretch reads RKCLRKAKKFVPASSCQSLESDGSYQKPSYIL.

This sequence belongs to the selectin/LECAM family. As to quaternary structure, interacts with SELPLG/PSGL1 and PODXL2 through the sialyl Lewis X epitope. SELPLG sulfation appears not to be required for this interaction.

Its subcellular location is the cell membrane. In terms of biological role, cell-surface glycoprotein having a role in immunoadhesion. Mediates in the adhesion of blood neutrophils in cytokine-activated endothelium through interaction with SELPLG/PSGL1. May have a role in capillary morphogenesis. This is E-selectin (SELE) from Homo sapiens (Human).